The sequence spans 569 residues: Glucose-6-phosphate isomerase, cytosolic 2A (569 aa).

E360 functions as the Proton donor in the catalytic mechanism. Catalysis depends on residues H391 and K516.

This sequence belongs to the GPI family. In terms of assembly, homodimer.

The protein localises to the cytoplasm. It catalyses the reaction alpha-D-glucose 6-phosphate = beta-D-fructose 6-phosphate. The protein operates within carbohydrate degradation; glycolysis; D-glyceraldehyde 3-phosphate and glycerone phosphate from D-glucose: step 2/4. The polypeptide is Glucose-6-phosphate isomerase, cytosolic 2A (PGIC2-A) (Clarkia lewisii (Farewell-to-spring)).